The chain runs to 160 residues: Aspartate 1-decarboxylase 2 (160 aa).

The active-site Schiff-base intermediate with substrate; via pyruvic acid is S25. The residue at position 25 (S25) is a Pyruvic acid (Ser). T57 serves as a coordination point for substrate. Y58 (proton donor) is an active-site residue. 73-75 (GAA) provides a ligand contact to substrate.

Belongs to the PanD family. As to quaternary structure, heterooctamer of four alpha and four beta subunits. Pyruvate serves as cofactor. Post-translationally, is synthesized initially as an inactive proenzyme, which is activated by self-cleavage at a specific serine bond to produce a beta-subunit with a hydroxyl group at its C-terminus and an alpha-subunit with a pyruvoyl group at its N-terminus.

Its subcellular location is the cytoplasm. It carries out the reaction L-aspartate + H(+) = beta-alanine + CO2. Its pathway is cofactor biosynthesis; (R)-pantothenate biosynthesis; beta-alanine from L-aspartate: step 1/1. Functionally, catalyzes the pyruvoyl-dependent decarboxylation of aspartate to produce beta-alanine. This is Aspartate 1-decarboxylase 2 from Frankia casuarinae (strain DSM 45818 / CECT 9043 / HFP020203 / CcI3).